Here is a 720-residue protein sequence, read N- to C-terminus: ABC transporter G family member STR2 (720 aa).

The Cytoplasmic segment spans residues 1 to 467; sequence MRHANGRRGD…NFINIRRTPE (467 aa). One can recognise an ABC transporter domain in the interval 25 to 274; that stretch reads LEFSNLTYTV…LGRMGRKVPK (250 aa). Residue 70-77 participates in ATP binding; the sequence is GPSGAGKS. A disordered region spans residues 313-346; sequence GAHEMSIVPPSPAPSHREGRGHDRSNKRLHLKDQ. The span at 327-346 shows a compositional bias: basic and acidic residues; that stretch reads SHREGRGHDRSNKRLHLKDQ. A helical transmembrane segment spans residues 468–488; that stretch reads LFLSRLVVLTVMGIMMATMFM. The Extracellular portion of the chain corresponds to 489-502; that stretch reads HPKKNLQGITNRLS. Residues 503 to 523 form a helical membrane-spanning segment; it reads FFIFTVCLFFFSSNDAVPAFI. At 524-547 the chain is on the cytoplasmic side; sequence QERFIFVRETSHNKYRASSYTIAG. Residues 548 to 568 traverse the membrane as a helical segment; that stretch reads LITYLPFLAVQAAVYAVIVWF. The Extracellular segment spans residues 569–575; it reads ALSLRGP. A helical membrane pass occupies residues 576–596; it reads FIYFLIVLYMSLLSTNSFVVF. Residues 597–604 are Cytoplasmic-facing; the sequence is VSSVVPNY. A helical membrane pass occupies residues 605–625; sequence ILGYAAVIAFTALFFLFCGYF. At 626–693 the chain is on the extracellular side; the sequence is LNSHDMPQYW…QVESKKWEKV (68 aa). An N-linked (GlcNAc...) asparagine glycan is attached at N681. A helical transmembrane segment spans residues 694-714; the sequence is YIMLAWAIVYRILFYIVLRFF. Residues 715-720 lie on the Cytoplasmic side of the membrane; it reads SKNQRT.

Belongs to the ABC transporter superfamily. ABCG family. Stunted arbuscule (STR) subfamily. In terms of assembly, heterodimerizes with STR; the resulting transporter is located in the peri-arbuscular membrane.

The protein resides in the cell membrane. In terms of biological role, together with STR, required for arbuscule development in arbuscular mycorrhizal (AM) symbiosis. This Petunia hybrida (Petunia) protein is ABC transporter G family member STR2.